The following is a 385-amino-acid chain: Polyketide synthase 2 (385 aa).

Cysteine 157 is an active-site residue.

Belongs to the thiolase-like superfamily. Chalcone/stilbene synthases family. In terms of tissue distribution, expressed in leaves and glandular trichomes.

Its subcellular location is the cytoplasm. Its function is as follows. Polyketide synthase responsible for the biosynthesis of secondary metabolites. The chain is Polyketide synthase 2 (PKSG2) from Cannabis sativa (Hemp).